The chain runs to 105 residues: Large ribosomal subunit protein eL36 (105 aa).

The interval 1–36 is disordered; the sequence is MAQERSGIAVGLNKGHKTTPLNTPKTRISRSKGKAS. Residues 27–36 are compositionally biased toward basic residues; the sequence is RISRSKGKAS.

Belongs to the eukaryotic ribosomal protein eL36 family. Component of the large ribosomal subunit (LSU).

It localises to the cytoplasm. Its function is as follows. Component of the ribosome, a large ribonucleoprotein complex responsible for the synthesis of proteins in the cell. The small ribosomal subunit (SSU) binds messenger RNAs (mRNAs) and translates the encoded message by selecting cognate aminoacyl-transfer RNA (tRNA) molecules. The large subunit (LSU) contains the ribosomal catalytic site termed the peptidyl transferase center (PTC), which catalyzes the formation of peptide bonds, thereby polymerizing the amino acids delivered by tRNAs into a polypeptide chain. The nascent polypeptides leave the ribosome through a tunnel in the LSU and interact with protein factors that function in enzymatic processing, targeting, and the membrane insertion of nascent chains at the exit of the ribosomal tunnel. This chain is Large ribosomal subunit protein eL36, found in Emericella nidulans (strain FGSC A4 / ATCC 38163 / CBS 112.46 / NRRL 194 / M139) (Aspergillus nidulans).